The chain runs to 131 residues: Small ribosomal subunit protein bS18 (131 aa).

Residues 1–10 are compositionally biased toward polar residues; that stretch reads MSNGTDSKTA. The interval 1-60 is disordered; the sequence is MSNGTDSKTASAPPARSGGGFGGGGSRGGDRGDRGDRGGDRGDRGGGLGGDDDKRGGGRG. The segment covering 17 to 27 has biased composition (gly residues); it reads SGGGFGGGGSR. A compositionally biased stretch (basic and acidic residues) spans 28-44; it reads GGDRGDRGDRGGDRGDR.

The protein belongs to the bacterial ribosomal protein bS18 family. In terms of assembly, part of the 30S ribosomal subunit. Forms a tight heterodimer with protein bS6.

Binds as a heterodimer with protein bS6 to the central domain of the 16S rRNA, where it helps stabilize the platform of the 30S subunit. The polypeptide is Small ribosomal subunit protein bS18 (Myxococcus xanthus (strain DK1622)).